Reading from the N-terminus, the 977-residue chain is Aspartate, glycine, lysine and serine-rich protein (977 aa).

The interval 23-116 is disordered; it reads GVLPDVDSGF…PITNLGSSTS (94 aa). Basic and acidic residues predominate over residues 37–50; the sequence is EETKSEPKQPDTKP. Positions 51–63 are enriched in polar residues; that stretch reads EQPSVSKPDSSVN. Asn136 carries an N-linked (GlcNAc...) asparagine glycan. Disordered stretches follow at residues 246–767 and 780–922; these read AGGG…TSRG and GGGK…GSGL. Over residues 251–278 the composition is skewed to low complexity; the sequence is YYSDSSDSSDSDSSGSDSSESGSSESGS. Residues 309 to 325 show a composition bias toward polar residues; it reads NGSPDNGTPGSGSSRYT. Residues 410–427 show a composition bias toward acidic residues; the sequence is LEDELLGSDSSDEDDIDD. The segment covering 428–443 has biased composition (gly residues); sequence GLGGLGLGAGPGGPGG. Basic residues-rich tracts occupy residues 447–457 and 465–540; these read TPKHKPRTDKK and KRKP…VQRK. The segment covering 541-557 has biased composition (basic and acidic residues); the sequence is QPREYKQESPEVEREHS. Residues 572–583 show a composition bias toward low complexity; the sequence is KILITSLTSSRG. A compositionally biased stretch (gly residues) spans 591–643; it reads DGSGSGNGGGDDGNGGGAGNGGGAGNGGGAGNGGGAGNGGGNGGGGNGGGGND. Basic and acidic residues predominate over residues 660 to 675; sequence EHRNRCEDDDDYREKC. Low complexity predominate over residues 700-724; sequence SGSSSSSSATESESSSTSTTPSTSS. 3 stretches are compositionally biased toward polar residues: residues 730-744, 758-767, and 785-801; these read ILSTLSGRSQKTRSG, SRPSVATSRG, and STGTTVTSKPSTGTSSA. Composition is skewed to low complexity over residues 803–814, 822–857, and 870–907; these read GLDLSGLLGQLG, GPKPDSKPSTGSPSTTSKPSTGSSSGPGLDLSGLLG, and KKPTASSKPTAPSTPSKSTGSSPGKGLDLSGLLGKLSP.

Component of the acid-insoluble and acid-soluble organic matrix of calcified layers of the shell (at protein level).

It localises to the secreted. This Lottia gigantea (Giant owl limpet) protein is Aspartate, glycine, lysine and serine-rich protein.